The sequence spans 379 residues: Cytochrome b (379 aa).

4 consecutive transmembrane segments (helical) span residues 33-53, 77-98, 113-133, and 178-198; these read FGSLLGACLTIQIITGLFLAM, WTIRYLHANGASMFFLCLFIHV, WNVGIILLFSVMATAFMGYVL, and FFALHFILPFIISALVMIHLL. 2 residues coordinate heme b: H83 and H97. 2 residues coordinate heme b: H182 and H196. A ubiquinone is bound at residue H201. The next 4 helical transmembrane spans lie at 226–246, 288–308, 320–340, and 347–367; these read TKDFLGLLLLILLLMTTALFY, LGGVLALILSILILMIIPFLQ, LSQFLFWILVADLLTLTWIGG, and FINIGQMASMLYFFLMIFIMP.

This sequence belongs to the cytochrome b family. As to quaternary structure, the cytochrome bc1 complex contains 11 subunits: 3 respiratory subunits (MT-CYB, CYC1 and UQCRFS1), 2 core proteins (UQCRC1 and UQCRC2) and 6 low-molecular weight proteins (UQCRH/QCR6, UQCRB/QCR7, UQCRQ/QCR8, UQCR10/QCR9, UQCR11/QCR10 and a cleavage product of UQCRFS1). This cytochrome bc1 complex then forms a dimer. It depends on heme b as a cofactor.

It localises to the mitochondrion inner membrane. In terms of biological role, component of the ubiquinol-cytochrome c reductase complex (complex III or cytochrome b-c1 complex) that is part of the mitochondrial respiratory chain. The b-c1 complex mediates electron transfer from ubiquinol to cytochrome c. Contributes to the generation of a proton gradient across the mitochondrial membrane that is then used for ATP synthesis. The sequence is that of Cytochrome b (MT-CYB) from Lepilemur ankaranensis (Ankarana sportive lemur).